The sequence spans 321 residues: Glucokinase (321 aa).

Position 8 to 13 (8 to 13 (GDVGGT)) interacts with ATP.

It belongs to the bacterial glucokinase family.

It localises to the cytoplasm. The enzyme catalyses D-glucose + ATP = D-glucose 6-phosphate + ADP + H(+). This chain is Glucokinase, found in Salmonella choleraesuis (strain SC-B67).